Consider the following 344-residue polypeptide: Glycerol-3-phosphate dehydrogenase [NAD(P)+] (344 aa).

NADPH contacts are provided by Trp11, Arg31, Arg32, and Lys105. Lys105, Gly133, and Ser135 together coordinate sn-glycerol 3-phosphate. NADPH is bound at residue Ala137. 5 residues coordinate sn-glycerol 3-phosphate: Lys188, Asp241, Ser251, Arg252, and Asn253. The Proton acceptor role is filled by Lys188. Arg252 contacts NADPH. Glu278 is an NADPH binding site.

The protein belongs to the NAD-dependent glycerol-3-phosphate dehydrogenase family.

It is found in the cytoplasm. The catalysed reaction is sn-glycerol 3-phosphate + NAD(+) = dihydroxyacetone phosphate + NADH + H(+). It carries out the reaction sn-glycerol 3-phosphate + NADP(+) = dihydroxyacetone phosphate + NADPH + H(+). It participates in membrane lipid metabolism; glycerophospholipid metabolism. Catalyzes the reduction of the glycolytic intermediate dihydroxyacetone phosphate (DHAP) to sn-glycerol 3-phosphate (G3P), the key precursor for phospholipid synthesis. The sequence is that of Glycerol-3-phosphate dehydrogenase [NAD(P)+] from Acidithiobacillus ferrooxidans (strain ATCC 23270 / DSM 14882 / CIP 104768 / NCIMB 8455) (Ferrobacillus ferrooxidans (strain ATCC 23270)).